Reading from the N-terminus, the 994-residue chain is Phosphoenolpyruvate carboxylase (994 aa).

Residues 1-66 (MKSSGSARAT…QGRTREDKDR (66 aa)) form a disordered region. 2 stretches are compositionally biased toward low complexity: residues 14–25 (AVSSSSAPAHAE) and 41–54 (AAAR…AASA). Active-site residues include His-204 and Lys-646.

The protein belongs to the PEPCase type 1 family. The cofactor is Mg(2+).

It carries out the reaction oxaloacetate + phosphate = phosphoenolpyruvate + hydrogencarbonate. Forms oxaloacetate, a four-carbon dicarboxylic acid source for the tricarboxylic acid cycle. This is Phosphoenolpyruvate carboxylase from Burkholderia mallei (strain NCTC 10247).